Reading from the N-terminus, the 229-residue chain is Endonuclease NucS (229 aa).

Belongs to the NucS endonuclease family.

The protein localises to the cytoplasm. Cleaves both 3' and 5' ssDNA extremities of branched DNA structures. The protein is Endonuclease NucS of Corynebacterium diphtheriae (strain ATCC 700971 / NCTC 13129 / Biotype gravis).